A 122-amino-acid chain; its full sequence is Small ribosomal subunit protein uS13 (122 aa).

The disordered stretch occupies residues 99 to 122 (RGQRTHTNARTRKGPAKAIAGKKK).

It belongs to the universal ribosomal protein uS13 family. As to quaternary structure, part of the 30S ribosomal subunit. Forms a loose heterodimer with protein S19. Forms two bridges to the 50S subunit in the 70S ribosome.

Functionally, located at the top of the head of the 30S subunit, it contacts several helices of the 16S rRNA. In the 70S ribosome it contacts the 23S rRNA (bridge B1a) and protein L5 of the 50S subunit (bridge B1b), connecting the 2 subunits; these bridges are implicated in subunit movement. Contacts the tRNAs in the A and P-sites. In Bradyrhizobium sp. (strain ORS 278), this protein is Small ribosomal subunit protein uS13.